Here is a 619-residue protein sequence, read N- to C-terminus: Thiohydroximate-O-sulfate sulfur/sulfate-lyase (nitrile-forming) NSP4 (619 aa).

2 consecutive Jacalin-type lectin domains span residues 2 to 142 (AQKV…YFAP) and 151 to 292 (AKKL…YISL). 5 Kelch repeats span residues 326–374 (KIYS…VCMV), 379–425 (TLYV…SMAA), 429–478 (NVYV…VVQG), 480–524 (VWVV…ASAA), and 528–583 (HIVI…GWTA). The active-site Proton donor is the arginine 386. Arginine 386, serine 419, arginine 441, glycine 470, and valine 519 together coordinate a (Z)-N-(sulfonatooxy)alkanimidothioate. Arginine 441 acts as the Proton donor in catalysis. Fe(2+)-binding residues include glutamate 535, aspartate 539, and histidine 543. Residue tryptophan 581 participates in a (Z)-N-(sulfonatooxy)alkanimidothioate binding.

This sequence belongs to the jacalin lectin family. Fe(2+) serves as cofactor. In terms of tissue distribution, mainly expressed in roots, and, to a lower extent, in seedlings and leaves. Observed in seeds.

The catalysed reaction is a (Z)-N-(sulfonatooxy)alkanimidothioate = a nitrile + sulfur + sulfate. The enzyme catalyses (Z)-phenyl-N-(sulfonatooxy)methanimidothioate = phenylacetonitrile + sulfur + sulfate. It catalyses the reaction (Z)-N-(sulfonatooxy)prop-2-enimidothioate = but-3-enenitrile + sulfur + sulfate. Specifier protein that contributes to constitutive and herbivore-induced simple nitrile formation. Promotes simple nitriles, but not epithionitrile or thiocyanate formation. Converts allylglucosinolate and benzylglucosinolate (glucotropaeolin) to their corresponding simple nitriles in the presence of myrosinase. This chain is Thiohydroximate-O-sulfate sulfur/sulfate-lyase (nitrile-forming) NSP4, found in Arabidopsis thaliana (Mouse-ear cress).